The sequence spans 322 residues: NADH-cytochrome b5 reductase 2 (322 aa).

A helical membrane pass occupies residues 32 to 48; it reads LAPIYISVGLAGLGVGL. The FAD-binding FR-type domain maps to 72-176; sequence QGWVDLKLSE…KGPIPKYPWE (105 aa). Residue 179–214 coordinates FAD; that stretch reads KHKHICLIAGGTGITPMYQLARQIFKNPEDQTKVTL.

This sequence belongs to the flavoprotein pyridine nucleotide cytochrome reductase family. The cofactor is FAD.

The protein resides in the mitochondrion outer membrane. The enzyme catalyses 2 Fe(III)-[cytochrome b5] + NADH = 2 Fe(II)-[cytochrome b5] + NAD(+) + H(+). In terms of biological role, may mediate the reduction of outer membrane cytochrome b5. The protein is NADH-cytochrome b5 reductase 2 (mcr1) of Aspergillus clavatus (strain ATCC 1007 / CBS 513.65 / DSM 816 / NCTC 3887 / NRRL 1 / QM 1276 / 107).